The chain runs to 132 residues: Antileukoproteinase (132 aa).

The signal sequence occupies residues 1 to 25; the sequence is MKSSGLFPFLVLLALGTLAPWAVEG. 2 WAP domains span residues 28–76 and 82–130; these read KSFK…LDPV and TRRK…VSPV. 8 disulfide bridges follow: cysteine 35-cysteine 64, cysteine 43-cysteine 68, cysteine 51-cysteine 63, cysteine 57-cysteine 72, cysteine 89-cysteine 118, cysteine 96-cysteine 122, cysteine 105-cysteine 117, and cysteine 111-cysteine 126. The elastase inhibitory domain stretch occupies residues 84 to 132; it reads RKPGKCPVTYGQCLMLNPPNFCEMDGQCKRDLKCCMGMCGKSCVSPVKA.

As to quaternary structure, interacts with GRN; interaction protects progranulin from proteolysis. Detected in blood plasma. Detected in bone marrow myeloid cells. Detected in airway sputum. Detected in parotid gland secretions. Detected in seminal plasma (at protein level). Detected in uterus cervix.

The protein resides in the secreted. Acid-stable proteinase inhibitor with strong affinities for trypsin, chymotrypsin, elastase, and cathepsin G. Modulates the inflammatory and immune responses after bacterial infection, and after infection by the intracellular parasite L.major. Down-regulates responses to bacterial lipopolysaccharide (LPS). Plays a role in regulating the activation of NF-kappa-B and inflammatory responses. Has antimicrobial activity against mycobacteria, but not against salmonella. Contributes to normal resistance against infection by M.tuberculosis. Required for normal resistance to infection by L.major. Required for normal wound healing, probably by preventing tissue damage by limiting protease activity. Together with ELANE, required for normal differentiation and proliferation of bone marrow myeloid cells. In Homo sapiens (Human), this protein is Antileukoproteinase (SLPI).